The primary structure comprises 299 residues: AT-hook motif nuclear-localized protein 25 (299 aa).

2 disordered regions span residues 1–87 (MSSY…RDSP) and 216–251 (EEETPPPRTTGVQQQQPEASQSSEVTGSGAQACESN). 2 stretches are compositionally biased toward basic and acidic residues: residues 14–23 (HLQRPEDSRT) and 33–42 (NRSEADEAKA). Low complexity-rich tracts occupy residues 44 to 72 (TTPTGGATSSATASGSSSGRRPRGRPAGS) and 224 to 239 (TTGVQQQQPEASQSSE). Positions 63–75 (RRPRGRPAGSKNK) form a DNA-binding region, a.T hook. In terms of domain architecture, PPC spans 87–233 (PNVLRSHVLE…TTGVQQQQPE (147 aa)). The span at 240-251 (VTGSGAQACESN) shows a compositional bias: polar residues.

As to quaternary structure, homodimer. Interacts with AHL27 and AHL29. In terms of tissue distribution, expressed in seedlings, leaves, stems, floral tips and flowers.

The protein localises to the nucleus. Functionally, transcription factor that specifically binds AT-rich DNA sequences related to the nuclear matrix attachment regions (MARs). Binds the DNA sequence GNFEI (GA-negative feedback element I) in the GA3OX1 promoter. Binding to GNFEI sequence is required for GA-negative feedback regulation of GA3OX1. In Arabidopsis thaliana (Mouse-ear cress), this protein is AT-hook motif nuclear-localized protein 25.